The following is a 127-amino-acid chain: UPF0166 protein PH1503 (127 aa).

Belongs to the UPF0166 family.

The chain is UPF0166 protein PH1503 from Pyrococcus horikoshii (strain ATCC 700860 / DSM 12428 / JCM 9974 / NBRC 100139 / OT-3).